Reading from the N-terminus, the 83-residue chain is Small ribosomal subunit protein bS20 (83 aa).

The disordered stretch occupies residues 60-83 (ASKGLIHKNKASRDKSRLAAKLAN).

The protein belongs to the bacterial ribosomal protein bS20 family.

Its function is as follows. Binds directly to 16S ribosomal RNA. The polypeptide is Small ribosomal subunit protein bS20 (Streptococcus thermophilus (strain CNRZ 1066)).